A 382-amino-acid chain; its full sequence is D-galactonate dehydratase (382 aa).

D183 contributes to the Mg(2+) binding site. The Proton donor role is filled by H185. Mg(2+) contacts are provided by E209 and E235. Residue H285 is the Proton acceptor of the active site.

It belongs to the mandelate racemase/muconate lactonizing enzyme family. GalD subfamily. Requires Mg(2+) as cofactor.

The enzyme catalyses D-galactonate = 2-dehydro-3-deoxy-D-galactonate + H2O. The protein operates within carbohydrate acid metabolism; D-galactonate degradation; D-glyceraldehyde 3-phosphate and pyruvate from D-galactonate: step 1/3. Its function is as follows. Catalyzes the dehydration of D-galactonate to 2-keto-3-deoxy-D-galactonate. In Pectobacterium atrosepticum (strain SCRI 1043 / ATCC BAA-672) (Erwinia carotovora subsp. atroseptica), this protein is D-galactonate dehydratase.